We begin with the raw amino-acid sequence, 194 residues long: uncharacterized protein (194 aa).

This sequence belongs to the mimivirus R457/R459 family.

Its subcellular location is the virion. This is an uncharacterized protein from Acanthamoeba polyphaga mimivirus (APMV).